Reading from the N-terminus, the 84-residue chain is RNA-binding protein Hfq (84 aa).

The Sm domain occupies D11–I71.

This sequence belongs to the Hfq family. In terms of assembly, homohexamer.

RNA chaperone that binds small regulatory RNA (sRNAs) and mRNAs to facilitate mRNA translational regulation in response to envelope stress, environmental stress and changes in metabolite concentrations. Also binds with high specificity to tRNAs. The chain is RNA-binding protein Hfq from Beijerinckia indica subsp. indica (strain ATCC 9039 / DSM 1715 / NCIMB 8712).